Here is a 464-residue protein sequence, read N- to C-terminus: Argininosuccinate lyase (464 aa).

A2 is modified (N-acetylalanine). The residue at position 7 (K7) is an N6-acetyllysine. S27 serves as a coordination point for 2-(N(omega)-L-arginino)succinate. N6-acetyllysine is present on K69. Residues N114 and T159 each contribute to the 2-(N(omega)-L-arginino)succinate site. The Proton acceptor role is filled by H160. Catalysis depends on S281, which acts as the Proton donor. K288 carries the N6-acetyllysine modification. Residues N289, Y321, Q326, and K329 each contribute to the 2-(N(omega)-L-arginino)succinate site.

This sequence belongs to the lyase 1 family. Argininosuccinate lyase subfamily. In terms of assembly, homotetramer. Forms tissue-specific complexes with ASS1, SLC7A1, HSP90AA1 and nitric oxide synthase NOS1, NOS2 or NOS3; the complex maintenance is independent of ASL catalytic function. Post-translationally, acetylation modifies enzyme activity in response to alterations of extracellular nutrient availability. Acetylation increased with trichostin A (TSA) or with nicotinamide (NAM). Glucose increases acetylation by about a factor of 3 with decreasing enzyme activity. Acetylation on Lys-288 is decreased on the addition of extra amino acids resulting in activation of enzyme activity.

It catalyses the reaction 2-(N(omega)-L-arginino)succinate = fumarate + L-arginine. It functions in the pathway amino-acid biosynthesis; L-arginine biosynthesis; L-arginine from L-ornithine and carbamoyl phosphate: step 3/3. It participates in nitrogen metabolism; urea cycle; L-arginine and fumarate from (N(omega)-L-arginino)succinate: step 1/1. Its activity is regulated as follows. Enzyme activity is regulated by acetylation. In terms of biological role, catalyzes the reversible cleavage of L-argininosuccinate to fumarate and L-arginine, an intermediate step reaction in the urea cycle mostly providing for hepatic nitrogen detoxification into excretable urea as well as de novo L-arginine synthesis in nonhepatic tissues. Essential regulator of intracellular and extracellular L-arginine pools. As part of citrulline-nitric oxide cycle, forms tissue-specific multiprotein complexes with argininosuccinate synthase ASS1, transport protein SLC7A1 and nitric oxide synthase NOS1, NOS2 or NOS3, allowing for cell-autonomous L-arginine synthesis while channeling extracellular L-arginine to nitric oxide synthesis pathway. The protein is Argininosuccinate lyase (ASL) of Macaca fascicularis (Crab-eating macaque).